The primary structure comprises 505 residues: ATP nucleosidase Cap17 (505 aa).

The segment at 1-229 is cyclic oligonucleotide sensing-domain; that stretch reads MTNTNNEYVL…RLSEIAVELL (229 aa). The tract at residues 239–505 is purine nucleoside phosphorylase domain; the sequence is LHTPSVLILT…DYLQHGWIRA (267 aa).

The protein belongs to the Cap17 family.

It catalyses the reaction ATP + H2O = D-ribose 5-triphosphate + adenine. The catalysed reaction is dATP + H2O = 2-deoxyribose 5-triphosphate + adenine. Functionally, effector protein with (d)ATP degrading activity of a CBASS antivirus system. CBASS (cyclic oligonucleotide-based antiphage signaling system) provides immunity against bacteriophage. A CD-NTase protein synthesizes cyclic nucleotides in response to infection; these serve as specific second messenger signals. The signals activate a diverse range of effectors, leading to bacterial cell death and thus abortive phage infection. A type III CBASS system. Expression of this CBASS system (Cap18-Cap6-Cap7-CdnC-CapW-Cap17) in a susceptible E.coli (strain MG1655) confers resistance to bacteriophage P1, leading to cell lysis. By 50 minutes post-infection, ATP levels are markedly reduced while dATP has been eliminated. The C-terminal purine nucleoside phosphorylase (PNP) domain cleaves the N-glycosidic bond of (d)ATP to release adenine and a sugar triphosphate; has no activity on other (d)NTPs, nor on DNA or RNA. In vivo during phage infection has pleoitropic effects on nucleotide accumulation. This protein may be activated by the cognate CD-NTase (CdnC). This chain is ATP nucleosidase Cap17, found in Escherichia coli (strain KTE188).